The primary structure comprises 238 residues: 3-deoxy-manno-octulosonate cytidylyltransferase (238 aa).

The protein belongs to the KdsB family.

It localises to the cytoplasm. It carries out the reaction 3-deoxy-alpha-D-manno-oct-2-ulosonate + CTP = CMP-3-deoxy-beta-D-manno-octulosonate + diphosphate. It functions in the pathway nucleotide-sugar biosynthesis; CMP-3-deoxy-D-manno-octulosonate biosynthesis; CMP-3-deoxy-D-manno-octulosonate from 3-deoxy-D-manno-octulosonate and CTP: step 1/1. It participates in bacterial outer membrane biogenesis; lipopolysaccharide biosynthesis. Its function is as follows. Activates KDO (a required 8-carbon sugar) for incorporation into bacterial lipopolysaccharide in Gram-negative bacteria. The protein is 3-deoxy-manno-octulosonate cytidylyltransferase of Nitratiruptor sp. (strain SB155-2).